The sequence spans 99 residues: MKFFAIAALFAGALAMPTTEIEARTDKAVCPSGLYSNLVCADVDVLGILCLHATSPSETPRDARHFQEICAKVGKQARCAVLPVAEQAVLCQRPAGVSA.

Residues 1 to 15 (MKFFAIAALFAGALA) form the signal peptide. Intrachain disulfides connect Cys30–Cys79 and Cys40–Cys70.

The protein belongs to the cerato-ulmin hydrophobin family.

The protein resides in the secreted. It localises to the cell wall. It is found in the vacuole. The protein localises to the cytoplasmic vesicle. Functionally, aerial growth, conidiation, and dispersal of filamentous fungi in the environment rely upon a capability of their secreting small amphipathic proteins called hydrophobins (HPBs) with low sequence identity. Class I can self-assemble into an outermost layer of rodlet bundles on aerial cell surfaces, conferring cellular hydrophobicity that supports fungal growth, development and dispersal; whereas Class II form highly ordered films at water-air interfaces through intermolecular interactions but contribute nothing to the rodlet structure. Hyd2B contributes to certain cell wall-related features, such as hydrophobicity but is not involved in cell wall-related events during fungal proliferation in host hemocoel. Does not contribute to conidial hydrophobicity. Involved in insect hemocoel colonization independent of cell hydrophobicity. The protein is Class II hydrophobin B of Beauveria bassiana (strain ARSEF 2860) (White muscardine disease fungus).